Here is a 421-residue protein sequence, read N- to C-terminus: CinA-like protein (421 aa).

This sequence belongs to the CinA family.

The polypeptide is CinA-like protein (Synechococcus elongatus (strain ATCC 33912 / PCC 7942 / FACHB-805) (Anacystis nidulans R2)).